A 119-amino-acid polypeptide reads, in one-letter code: Large ribosomal subunit protein bL17 (119 aa).

The protein belongs to the bacterial ribosomal protein bL17 family. In terms of assembly, part of the 50S ribosomal subunit. Contacts protein L32.

This is Large ribosomal subunit protein bL17 from Psychrobacter sp. (strain PRwf-1).